We begin with the raw amino-acid sequence, 1369 residues long: Phospholipase D1 (1369 aa).

2 disordered regions span residues 27-90 (YSEK…SSWH) and 318-340 (ESHS…GRKK). Residues 31 to 53 (GTGRKDAEDHTPSKITDLEKNVD) are compositionally biased toward basic and acidic residues. Residues 208 to 379 (TDLIKVSVLD…NVLYSFLEFS (172 aa)) enclose the PX domain. PLD phosphodiesterase domains lie at 641 to 668 (LFWA…CFGR) and 941 to 968 (EMIY…NERS). Residues 1277 to 1289 (HETHEKSENDPKN) are compositionally biased toward basic and acidic residues. The disordered stretch occupies residues 1277 to 1320 (HETHEKSENDPKNPKAGSQGSGNTSASEDSKTEKPKTRTNNGLQ). The span at 1292 to 1303 (AGSQGSGNTSAS) shows a compositional bias: polar residues.

The protein belongs to the phospholipase D family.

It localises to the cytoplasm. It catalyses the reaction a 1,2-diacyl-sn-glycero-3-phosphocholine + H2O = a 1,2-diacyl-sn-glycero-3-phosphate + choline + H(+). With respect to regulation, activity is slightly stimulated by oleate. In terms of biological role, required for meiosis and spore formation. Seems to be involved in the coordinate induction of late meiotic events. The polypeptide is Phospholipase D1 (pld1) (Schizosaccharomyces pombe (strain 972 / ATCC 24843) (Fission yeast)).